A 198-amino-acid polypeptide reads, in one-letter code: tRNA (pseudouridine(54)-N(1))-methyltransferase (198 aa).

S-adenosyl-L-methionine is bound by residues Leu130, Gly153, 176 to 181, and Cys186; that span reads LSPLEL.

Belongs to the methyltransferase superfamily. TrmY family. As to quaternary structure, homodimer.

Its subcellular location is the cytoplasm. The catalysed reaction is pseudouridine(54) in tRNA + S-adenosyl-L-methionine = N(1)-methylpseudouridine(54) in tRNA + S-adenosyl-L-homocysteine + H(+). In terms of biological role, specifically catalyzes the N1-methylation of pseudouridine at position 54 (Psi54) in tRNAs. The chain is tRNA (pseudouridine(54)-N(1))-methyltransferase from Methanococcus maripaludis (strain C7 / ATCC BAA-1331).